We begin with the raw amino-acid sequence, 291 residues long: Ribosomal RNA small subunit methyltransferase A (291 aa).

S-adenosyl-L-methionine contacts are provided by Asn-29, Leu-31, Gly-56, Glu-77, Asp-102, and Asn-127.

Belongs to the class I-like SAM-binding methyltransferase superfamily. rRNA adenine N(6)-methyltransferase family. RsmA subfamily.

It is found in the cytoplasm. The catalysed reaction is adenosine(1518)/adenosine(1519) in 16S rRNA + 4 S-adenosyl-L-methionine = N(6)-dimethyladenosine(1518)/N(6)-dimethyladenosine(1519) in 16S rRNA + 4 S-adenosyl-L-homocysteine + 4 H(+). In terms of biological role, specifically dimethylates two adjacent adenosines (A1518 and A1519) in the loop of a conserved hairpin near the 3'-end of 16S rRNA in the 30S particle. May play a critical role in biogenesis of 30S subunits. This chain is Ribosomal RNA small subunit methyltransferase A, found in Geobacillus sp. (strain WCH70).